The sequence spans 378 residues: MLLKNASFYDDEVLKRADIRLKDSLITEIKENLSPINNEEVIECRDLFVLPSFIDLSVTGLEGYENLKQKAFKGGVGLLNVFNCDQSGIKNIMAIKNNQLADIATLKNKGGEILIAPSDAFLELISHYAKSYNLPLLISLENSFEALNSGELAYELGQNFVENAFENTRLVRFMEVSRALQIPVLLDKVNSITTLKLIKAFNDLGAKLQAQTPLSHLVLDESVYEDYEPRFKIAPPLRDKESQNALKEALKNNEIAMLTSLHASKNSNAQLFEESAFGCESIEDAFSVAYTFLVQKKVISFQQLIKVMAINQAKFLKLNAGEVKENQLANLMIVDLNAQTRVSNQNSPFYGLELYGEVQRMILKGQTTFIKENACKKS.

It belongs to the metallo-dependent hydrolases superfamily. DHOase family. PyrC' subfamily.

In terms of biological role, non-functional DHOase. The polypeptide is Probable dihydroorotase-like protein (pyrC') (Helicobacter pylori (strain ATCC 700392 / 26695) (Campylobacter pylori)).